The primary structure comprises 257 residues: Imidazole glycerol phosphate synthase subunit HisF (257 aa).

Catalysis depends on residues D11 and D130.

Belongs to the HisA/HisF family. In terms of assembly, heterodimer of HisH and HisF.

The protein resides in the cytoplasm. The catalysed reaction is 5-[(5-phospho-1-deoxy-D-ribulos-1-ylimino)methylamino]-1-(5-phospho-beta-D-ribosyl)imidazole-4-carboxamide + L-glutamine = D-erythro-1-(imidazol-4-yl)glycerol 3-phosphate + 5-amino-1-(5-phospho-beta-D-ribosyl)imidazole-4-carboxamide + L-glutamate + H(+). It functions in the pathway amino-acid biosynthesis; L-histidine biosynthesis; L-histidine from 5-phospho-alpha-D-ribose 1-diphosphate: step 5/9. In terms of biological role, IGPS catalyzes the conversion of PRFAR and glutamine to IGP, AICAR and glutamate. The HisF subunit catalyzes the cyclization activity that produces IGP and AICAR from PRFAR using the ammonia provided by the HisH subunit. The protein is Imidazole glycerol phosphate synthase subunit HisF of Bradyrhizobium diazoefficiens (strain JCM 10833 / BCRC 13528 / IAM 13628 / NBRC 14792 / USDA 110).